Reading from the N-terminus, the 337-residue chain is Large ribosomal subunit protein uL3 (337 aa).

The disordered stretch occupies residues 1-20 (MASIHRPKRGSLAFSPRKRA).

Belongs to the universal ribosomal protein uL3 family. Part of the 50S ribosomal subunit. Forms a cluster with proteins L14 and L24e.

One of the primary rRNA binding proteins, it binds directly near the 3'-end of the 23S rRNA, where it nucleates assembly of the 50S subunit. In Methanosarcina barkeri (strain Fusaro / DSM 804), this protein is Large ribosomal subunit protein uL3.